A 214-amino-acid chain; its full sequence is Neuromodulin (214 aa).

A disordered region spans residues 1-214; it reads MLCCMRRTKQ…EEAKPDQENA (214 aa). 2 S-palmitoyl cysteine lipidation sites follow: Cys-3 and Cys-4. Basic and acidic residues-rich tracts occupy residues 9–33, 52–88, and 95–122; these read KQVEKNEDGDQKIDQDGNKPEDKAH, MKDDKKDDNSEEAVENHKGEAKDEAATTENKTPKTEE, and LEVKKEAISSPAEDKKQEPSSEKPKDTP. An IQ domain is found at 32 to 61; that stretch reads AHKAATKIQASFRGHIIRKKMKDDKKDDNS. A compositionally biased stretch (low complexity) spans 124–133; the sequence is EENQASAESE. Basic and acidic residues-rich tracts occupy residues 150–160, 168–193, and 205–214; these read QAKEESKKADV, ASEKEQEKAESSQEDVKKDEVEEIKA, and EEAKPDQENA.

It belongs to the neuromodulin family. Binds calmodulin with a greater affinity in the absence of Ca(2+) than in its presence. In terms of processing, palmitoylated. Palmitoylation is essential for plasma membrane association.

It is found in the cell membrane. It localises to the cell projection. The protein resides in the growth cone membrane. Its subcellular location is the synapse. The protein localises to the filopodium membrane. This protein is associated with nerve growth. It is a major component of the motile 'growth cones' that form the tips of elongating axons. Plays a role in axonal and dendritic filopodia induction. The polypeptide is Neuromodulin (gap43) (Xenopus laevis (African clawed frog)).